Here is a 1119-residue protein sequence, read N- to C-terminus: DNA-directed RNA polymerase subunit beta (1119 aa).

The protein belongs to the RNA polymerase beta chain family. The RNAP catalytic core consists of 2 alpha, 1 beta, 1 beta' and 1 omega subunit. When a sigma factor is associated with the core the holoenzyme is formed, which can initiate transcription.

The enzyme catalyses RNA(n) + a ribonucleoside 5'-triphosphate = RNA(n+1) + diphosphate. Functionally, DNA-dependent RNA polymerase catalyzes the transcription of DNA into RNA using the four ribonucleoside triphosphates as substrates. This chain is DNA-directed RNA polymerase subunit beta, found in Thermus thermophilus (strain ATCC BAA-163 / DSM 7039 / HB27).